Here is a 79-residue protein sequence, read N- to C-terminus: Translational regulator CsrA (79 aa).

This sequence belongs to the CsrA/RsmA family. In terms of assembly, homodimer; the beta-strands of each monomer intercalate to form a hydrophobic core, while the alpha-helices form wings that extend away from the core.

The protein localises to the cytoplasm. A translational regulator that binds mRNA to regulate translation initiation and/or mRNA stability. Usually binds in the 5'-UTR at or near the Shine-Dalgarno sequence preventing ribosome-binding, thus repressing translation. Its main target seems to be the major flagellin gene, while its function is anatagonized by FliW. In Geobacter sulfurreducens (strain ATCC 51573 / DSM 12127 / PCA), this protein is Translational regulator CsrA.